We begin with the raw amino-acid sequence, 159 residues long: Xanthine dehydrogenase iron-sulfur-binding subunit (159 aa).

Positions 7-82 (ITIECTINGM…GKEIRTLEGE (76 aa)) constitute a 2Fe-2S ferredoxin-type domain. C44, C49, and C52 together coordinate [2Fe-2S] cluster.

Heterotrimer of XdhA, XdhB and XdhC. [2Fe-2S] cluster is required as a cofactor.

Its pathway is purine metabolism; hypoxanthine degradation; urate from hypoxanthine: step 1/2. Its function is as follows. Iron-sulfur subunit of the xanthine dehydrogenase complex. The protein is Xanthine dehydrogenase iron-sulfur-binding subunit (xdhC) of Escherichia coli O157:H7.